Here is a 413-residue protein sequence, read N- to C-terminus: Putative glutamate synthase [NADPH] small chain (413 aa).

[4Fe-4S] cluster-binding residues include Cys-33, Cys-37, Cys-43, and Cys-47.

Aggregate of 4 catalytic active heterodimers, consisting of a large and a small subunit. It depends on [4Fe-4S] cluster as a cofactor.

The enzyme catalyses 2 L-glutamate + NADP(+) = L-glutamine + 2-oxoglutarate + NADPH + H(+). The protein operates within amino-acid biosynthesis; L-glutamate biosynthesis via GLT pathway; L-glutamate from 2-oxoglutarate and L-glutamine (NADP(+) route): step 1/1. It participates in energy metabolism; nitrogen metabolism. This chain is Putative glutamate synthase [NADPH] small chain (gltD), found in Cereibacter sphaeroides (Rhodobacter sphaeroides).